We begin with the raw amino-acid sequence, 143 residues long: Nucleoside diphosphate kinase (143 aa).

Residues Lys-11, Phe-59, Arg-87, Thr-93, Arg-104, and Asn-114 each contribute to the ATP site. His-117 acts as the Pros-phosphohistidine intermediate in catalysis.

The protein belongs to the NDK family. In terms of assembly, homotetramer. Mg(2+) is required as a cofactor.

Its subcellular location is the cytoplasm. It carries out the reaction a 2'-deoxyribonucleoside 5'-diphosphate + ATP = a 2'-deoxyribonucleoside 5'-triphosphate + ADP. It catalyses the reaction a ribonucleoside 5'-diphosphate + ATP = a ribonucleoside 5'-triphosphate + ADP. Functionally, major role in the synthesis of nucleoside triphosphates other than ATP. The ATP gamma phosphate is transferred to the NDP beta phosphate via a ping-pong mechanism, using a phosphorylated active-site intermediate. The sequence is that of Nucleoside diphosphate kinase from Shewanella sp. (strain W3-18-1).